The following is a 52-amino-acid chain: Venom peptide 4b (52 aa).

The N-terminal stretch at 1–23 is a signal peptide; the sequence is MRSAILLVIVAIVAILGFLGVNA. AXPX repeat units lie at residues 23 to 26, 31 to 34, and 39 to 42; these read AEPL, AEPN, and AAPL. A propeptide spanning residues 24–41 is cleaved from the precursor; sequence EPLPSPLAEPNPHAKAAP. The segment at 30–52 is disordered; sequence LAEPNPHAKAAPLSPAAMASLAG. The span at 37 to 52 shows a compositional bias: low complexity; the sequence is AKAAPLSPAAMASLAG. Position 51 is an alanine amide (alanine 51).

Expressed by the venom gland.

Its subcellular location is the secreted. The sequence is that of Venom peptide 4b from Eumenes pomiformis (Potter wasp).